The chain runs to 320 residues: L-lactate dehydrogenase (320 aa).

NAD(+) is bound by residues valine 18, aspartate 39, arginine 44, tyrosine 69, and 83-84; that span reads GA. Residues glutamine 86 and arginine 92 each coordinate substrate. NAD(+)-binding positions include serine 105, 122-124, and serine 147; that span reads AAN. 124-127 contributes to the substrate binding site; sequence NPVD. 152-155 contributes to the substrate binding site; sequence DSSR. Histidine 179 functions as the Proton acceptor in the catalytic mechanism. Tyrosine 223 is subject to Phosphotyrosine. Residue threonine 232 participates in substrate binding.

The protein belongs to the LDH/MDH superfamily. LDH family. In terms of assembly, homotetramer.

Its subcellular location is the cytoplasm. It catalyses the reaction (S)-lactate + NAD(+) = pyruvate + NADH + H(+). Its pathway is fermentation; pyruvate fermentation to lactate; (S)-lactate from pyruvate: step 1/1. The quaternary structure is constitutionally similar to the active conformation of allosteric LDHs, and the regulation is independent of the fructose 1,6-bisphosphate-binding site. Functionally, catalyzes the conversion of lactate to pyruvate. In Lactiplantibacillus pentosus (Lactobacillus pentosus), this protein is L-lactate dehydrogenase.